A 549-amino-acid polypeptide reads, in one-letter code: Cytoplasmic trehalase (549 aa).

Substrate contacts are provided by residues arginine 168, 175 to 176 (WD), asparagine 212, 221 to 223 (RSQ), 292 to 294 (RDE), and glycine 324. Residues aspartate 326 and glutamate 509 each act as proton donor/acceptor in the active site. Glutamate 525 contributes to the substrate binding site.

It belongs to the glycosyl hydrolase 37 family. As to quaternary structure, monomer.

It localises to the cytoplasm. It carries out the reaction alpha,alpha-trehalose + H2O = alpha-D-glucose + beta-D-glucose. Its pathway is glycan degradation; trehalose degradation; D-glucose from alpha,alpha-trehalose: step 1/1. Its function is as follows. Hydrolyzes trehalose to glucose. Could be involved, in cells returning to low osmolarity conditions, in the utilization of the accumulated cytoplasmic trehalose, which was synthesized in response to high osmolarity. This Salmonella schwarzengrund (strain CVM19633) protein is Cytoplasmic trehalase.